The following is a 319-amino-acid chain: Coiled-coil domain-containing protein PF3D7_1144200 (319 aa).

The segment covering 1–12 (MSEEHSNDHIED) has biased composition (basic and acidic residues). Disordered regions lie at residues 1 to 43 (MSEE…SESS) and 112 to 158 (KLEK…NQHN). The span at 16 to 26 (CSQNCDETNSP) shows a compositional bias: polar residues. Composition is skewed to basic and acidic residues over residues 27–36 (KNEKDEKDFK) and 112–131 (KLEKEKEKNEKKEKKEKKVT). Coiled-coil stretches lie at residues 100 to 134 (DLANKKENKTKFKLEKEKEKNEKKEKKEKKVTNDS), 166 to 242 (ELNE…IKKN), and 281 to 310 (NSNCEQIQNVRDEFAELKNDLNKIMNLINI). A compositionally biased stretch (low complexity) spans 132 to 150 (NDSTNNKNKNNSVPFLNEN).

This chain is Coiled-coil domain-containing protein PF3D7_1144200, found in Plasmodium falciparum (isolate 3D7).